The following is a 129-amino-acid chain: MKLLIGILFCTLIMGVTGDSWYSFFKEAVQGASDLWRAYWDMRDANVQNSGRYFRARGNYEAAQRGPGGVWAAKIISNVGEYLQGFLYQIYLGDSYGLEDQVSNRRAEEWGRSGQDPDHFRPAGLPKKY.

The signal sequence occupies residues 1-18 (MKLLIGILFCTLIMGVTG). Basic and acidic residues predominate over residues 107–121 (AEEWGRSGQDPDHFR). A disordered region spans residues 107 to 129 (AEEWGRSGQDPDHFRPAGLPKKY).

This sequence belongs to the SAA family. In terms of assembly, apolipoprotein of the HDL complex.

It is found in the secreted. Major acute phase reactant. This chain is Serum amyloid A-4 protein, found in Bos taurus (Bovine).